The following is a 335-amino-acid chain: tRNA N6-adenosine threonylcarbamoyltransferase (335 aa).

Fe cation contacts are provided by His111 and His115. Residues 133-137 (IISGG), Asp166, Gly179, Asp183, and Asn268 each bind substrate. Fe cation is bound at residue Asp296.

This sequence belongs to the KAE1 / TsaD family. The cofactor is Fe(2+).

The protein resides in the cytoplasm. The catalysed reaction is L-threonylcarbamoyladenylate + adenosine(37) in tRNA = N(6)-L-threonylcarbamoyladenosine(37) in tRNA + AMP + H(+). Required for the formation of a threonylcarbamoyl group on adenosine at position 37 (t(6)A37) in tRNAs that read codons beginning with adenine. Is involved in the transfer of the threonylcarbamoyl moiety of threonylcarbamoyl-AMP (TC-AMP) to the N6 group of A37, together with TsaE and TsaB. TsaD likely plays a direct catalytic role in this reaction. The polypeptide is tRNA N6-adenosine threonylcarbamoyltransferase (Aquifex aeolicus (strain VF5)).